The primary structure comprises 100 residues: NADH-quinone oxidoreductase subunit K (100 aa).

3 helical membrane-spanning segments follow: residues 2–22 (VPTT…MIGV), 29–49 (IMVF…LVAF), and 63–83 (FIVM…IVAI).

It belongs to the complex I subunit 4L family. NDH-1 is composed of 15 different subunits. Subunits NuoA, H, J, K, L, M, N constitute the membrane sector of the complex.

It is found in the cell membrane. The catalysed reaction is a quinone + NADH + 5 H(+)(in) = a quinol + NAD(+) + 4 H(+)(out). Functionally, NDH-1 shuttles electrons from NADH, via FMN and iron-sulfur (Fe-S) centers, to quinones in the respiratory chain. The immediate electron acceptor for the enzyme in this species is believed to be a menaquinone. Couples the redox reaction to proton translocation (for every two electrons transferred, four hydrogen ions are translocated across the cytoplasmic membrane), and thus conserves the redox energy in a proton gradient. This Deinococcus deserti (strain DSM 17065 / CIP 109153 / LMG 22923 / VCD115) protein is NADH-quinone oxidoreductase subunit K.